Here is a 126-residue protein sequence, read N- to C-terminus: uncharacterized protein (126 aa).

2 stretches are compositionally biased toward basic residues: residues arginine 21–arginine 31 and arginine 41–arginine 83. The disordered stretch occupies residues arginine 21–arginine 83.

This is an uncharacterized protein from Saccharomyces cerevisiae (strain ATCC 204508 / S288c) (Baker's yeast).